Consider the following 720-residue polypeptide: Replication restart protein PriA (720 aa).

One can recognise a Helicase ATP-binding domain in the interval 200-366; that stretch reads ILMKNCFTSW…LHKKCFYIKF (167 aa). 213 to 220 serves as a coordination point for ATP; that stretch reads KNNFYLKV. The short motif at 309 to 312 is the DEAH box element; that stretch reads NQEH. Zn(2+) contacts are provided by Cys-425, Cys-428, Cys-434, Cys-437, Cys-452, Cys-455, Cys-465, and Cys-468.

Belongs to the helicase family. PriA subfamily. Component of the replication restart primosome. Zn(2+) serves as cofactor.

It carries out the reaction Couples ATP hydrolysis with the unwinding of duplex DNA by translocating in the 3'-5' direction.. The catalysed reaction is ATP + H2O = ADP + phosphate + H(+). Initiates the restart of stalled replication forks, which reloads the replicative helicase on sites other than the origin of replication. Recognizes and binds to abandoned replication forks and remodels them to uncover a helicase loading site. Promotes assembly of the primosome at these replication forks. The sequence is that of Replication restart protein PriA from Buchnera aphidicola subsp. Schizaphis graminum (strain Sg).